A 162-amino-acid chain; its full sequence is UPF0305 protein MmarC7_1691 (162 aa).

This sequence belongs to the UPF0305 family.

This Methanococcus maripaludis (strain C7 / ATCC BAA-1331) protein is UPF0305 protein MmarC7_1691.